The following is a 307-amino-acid chain: Aspartate carbamoyltransferase catalytic subunit (307 aa).

Residues R54 and T55 each coordinate carbamoyl phosphate. K83 serves as a coordination point for L-aspartate. Carbamoyl phosphate is bound by residues R104, H132, and Q135. L-aspartate is bound by residues R165 and R228. Positions 267 and 268 each coordinate carbamoyl phosphate.

The protein belongs to the aspartate/ornithine carbamoyltransferase superfamily. ATCase family. In terms of assembly, heterododecamer (2C3:3R2) of six catalytic PyrB chains organized as two trimers (C3), and six regulatory PyrI chains organized as three dimers (R2).

The catalysed reaction is carbamoyl phosphate + L-aspartate = N-carbamoyl-L-aspartate + phosphate + H(+). It functions in the pathway pyrimidine metabolism; UMP biosynthesis via de novo pathway; (S)-dihydroorotate from bicarbonate: step 2/3. Its function is as follows. Catalyzes the condensation of carbamoyl phosphate and aspartate to form carbamoyl aspartate and inorganic phosphate, the committed step in the de novo pyrimidine nucleotide biosynthesis pathway. The polypeptide is Aspartate carbamoyltransferase catalytic subunit (Clostridium perfringens (strain 13 / Type A)).